Consider the following 216-residue polypeptide: GTPase IMAP family member GIMD1 (216 aa).

The region spanning 5-216 (KMIINLAVLG…ENHFQVLSFT (212 aa)) is the AIG1-type G domain. GTP contacts are provided by residues 14-22 (GKTQSGKSS), Ser35, and 147-149 (HAE).

The protein belongs to the TRAFAC class TrmE-Era-EngA-EngB-Septin-like GTPase superfamily. AIG1/Toc34/Toc159-like paraseptin GTPase family. IAN subfamily.

The protein is GTPase IMAP family member GIMD1 (Gimd1) of Rattus norvegicus (Rat).